The primary structure comprises 246 residues: Adenylate kinase 4 (246 aa).

Alanine 2 is subject to N-acetylalanine. ATP is bound at residue glycine 43–threonine 48. Residues serine 63–valine 92 are NMP. AMP contacts are provided by residues threonine 64, arginine 69, glutamate 90–valine 92, glycine 118–arginine 121, and glutamine 125. An LID region spans residues glycine 159–aspartate 196. An ATP-binding site is contributed by arginine 160. 2 residues coordinate AMP: arginine 193 and arginine 204.

The protein belongs to the adenylate kinase family. In terms of assembly, monomer.

The protein localises to the cytoplasm. It carries out the reaction AMP + ATP = 2 ADP. Its function is as follows. Catalyzes the reversible transfer of the terminal phosphate group between ATP and AMP. Plays an important role in cellular energy homeostasis and in adenine nucleotide metabolism. The protein is Adenylate kinase 4 (ADK1) of Arabidopsis thaliana (Mouse-ear cress).